A 296-amino-acid polypeptide reads, in one-letter code: Probable xyloglucan endotransglucosylase/hydrolase 1 (296 aa).

The N-terminal stretch at 1–22 (MGIIKGVLFSIVLINLSLVVFC) is a signal peptide. One can recognise a GH16 domain in the interval 23–221 (GYPRRPVDVP…WANAPFTASY (199 aa)). E107 serves as the catalytic Nucleophile. E111 (proton donor) is an active-site residue. E111 serves as a coordination point for xyloglucan. An N-linked (GlcNAc...) asparagine glycan is attached at N115. Residues 124–126 (QTN), 134–136 (NRE), 200–201 (DW), and G205 each bind xyloglucan. 2 disulfide bridges follow: C229–C240 and C277–C290. R282 is a binding site for xyloglucan.

This sequence belongs to the glycosyl hydrolase 16 family. XTH group 1 subfamily. Contains at least one intrachain disulfide bond essential for its enzymatic activity.

It localises to the secreted. It is found in the cell wall. The protein localises to the extracellular space. Its subcellular location is the apoplast. It carries out the reaction breaks a beta-(1-&gt;4) bond in the backbone of a xyloglucan and transfers the xyloglucanyl segment on to O-4 of the non-reducing terminal glucose residue of an acceptor, which can be a xyloglucan or an oligosaccharide of xyloglucan.. Its function is as follows. Catalyzes xyloglucan endohydrolysis (XEH) and/or endotransglycosylation (XET). Cleaves and religates xyloglucan polymers, an essential constituent of the primary cell wall, and thereby participates in cell wall construction of growing tissues. The chain is Probable xyloglucan endotransglucosylase/hydrolase 1 (XTH1) from Solanum lycopersicum (Tomato).